Reading from the N-terminus, the 151-residue chain is MSRVQLALRVPDLEASIGFYSKLFGTGPAKVRPGYANFAIAEPPLKLVLIEGAGEDATRLDHLGVEVEDSAQVGHAARRLKESGLATVEENDTACCYAVQDKVWVTGPGGEPWEVYVVKGDADTLAKADDSACCTPRDSGSAGAAVGADCC.

The region spanning Ser-2–Val-118 is the VOC domain. Gln-5 lines the Fe(2+) pocket. Position 61 (Asp-61) interacts with roxarsone (III). Position 62 (His-62) interacts with Fe(2+). Positions 95 and 96 each coordinate roxarsone (III). Fe(2+) is bound at residue Glu-114.

Monomer. Requires Fe(2+) as cofactor.

It catalyses the reaction methylarsonous acid + AH2 + O2 = arsenite + methanol + A + H(+). It carries out the reaction roxarsone (III) + AH2 + O2 = 4-hydroxy-3-nitrocyclohexa-2,5-dien-1-one + arsenite + A + H(+). The catalysed reaction is nitarsone (III) + AH2 + O2 = 4-nitrocyclohexa-2,5-dien-1-one + arsenite + A + H(+). The enzyme catalyses 4-aminophenylarsonous acid + AH2 + O2 = 4-aminocyclohexa-2,5-dien-1-one + arsenite + A. Functionally, nonheme iron-dependent dioxygenase that can break carbon-arsenic bonds, playing a role in the detoxification of environmental organoarsenical compounds. Catalyzes the oxygen-dependent demethylation of highly toxic methylarsonous acid (MAs(III)) to arsenite, which can then be exported out of the cell. Can also cleave the C-As bond in several trivalent aromatic arsenicals, including roxarsone (III), nitarsone (III) and (4-aminophenyl)arsonous acid. Organoarsenical degradation by this enzyme is proposed to have a significant impact on the arsenic biogeocycle that maintains a balance between organic and inorganic species. In Thermomonospora curvata (strain ATCC 19995 / DSM 43183 / JCM 3096 / KCTC 9072 / NBRC 15933 / NCIMB 10081 / Henssen B9), this protein is Trivalent organoarsenical cleaving enzyme.